The primary structure comprises 128 residues: Small ribosomal subunit protein bS6 (128 aa).

The protein belongs to the bacterial ribosomal protein bS6 family.

Binds together with bS18 to 16S ribosomal RNA. This Thermotoga maritima (strain ATCC 43589 / DSM 3109 / JCM 10099 / NBRC 100826 / MSB8) protein is Small ribosomal subunit protein bS6 (rpsF).